The sequence spans 401 residues: Phosphoglycerate kinase (401 aa).

Substrate-binding positions include 21–23 (DFN), Arg36, 59–62 (HLGR), Arg119, and Arg160. Residues Lys212, Glu330, and 357-360 (GGDS) contribute to the ATP site.

This sequence belongs to the phosphoglycerate kinase family. As to quaternary structure, monomer.

The protein resides in the cytoplasm. The enzyme catalyses (2R)-3-phosphoglycerate + ATP = (2R)-3-phospho-glyceroyl phosphate + ADP. It functions in the pathway carbohydrate degradation; glycolysis; pyruvate from D-glyceraldehyde 3-phosphate: step 2/5. The chain is Phosphoglycerate kinase from Limosilactobacillus fermentum (strain NBRC 3956 / LMG 18251) (Lactobacillus fermentum).